Here is a 352-residue protein sequence, read N- to C-terminus: Glycerol-1-phosphate dehydrogenase [NAD(P)+] (352 aa).

Residues 99–103 (GKSID) and 121–124 (TVAS) contribute to the NAD(+) site. Asp126 contributes to the substrate binding site. NAD(+) is bound at residue Ser130. Asp173 lines the substrate pocket. Asp173 and His253 together coordinate Zn(2+). Substrate is bound at residue His257. His269 contributes to the Zn(2+) binding site.

This sequence belongs to the glycerol-1-phosphate dehydrogenase family. Homodimer. The cofactor is Zn(2+).

It localises to the cytoplasm. The catalysed reaction is sn-glycerol 1-phosphate + NAD(+) = dihydroxyacetone phosphate + NADH + H(+). The enzyme catalyses sn-glycerol 1-phosphate + NADP(+) = dihydroxyacetone phosphate + NADPH + H(+). The protein operates within membrane lipid metabolism; glycerophospholipid metabolism. With respect to regulation, totally inhibited by EDTA in vitro. Its function is as follows. Catalyzes the NAD(P)H-dependent reduction of dihydroxyacetonephosphate (DHAP or glycerone phosphate) to glycerol 1-phosphate (G1P). The G1P thus generated is used as the glycerophosphate backbone of phospholipids in the cellular membranes of Archaea. Is also able to catalyze the reverse reaction, i.e. the NAD(+)-dependent oxidation of G1P but not of G3P. Is not active toward glycerol, dihydroxyacetone, glyceraldehyde phosphate, and glycerol-2-phosphate. The protein is Glycerol-1-phosphate dehydrogenase [NAD(P)+] (egsA) of Aeropyrum pernix (strain ATCC 700893 / DSM 11879 / JCM 9820 / NBRC 100138 / K1).